The chain runs to 257 residues: Pimeloyl-[acyl-carrier protein] methyl ester esterase (257 aa).

The region spanning 16–242 is the AB hydrolase-1 domain; it reads LVLLHGWGLN…AAHAPFISHP (227 aa). Residues W22, 82–83, and 143–147 contribute to the substrate site; these read SL and FLGLQ. The Nucleophile role is filled by S82. Residues D207 and H235 contribute to the active site. H235 lines the substrate pocket.

The protein belongs to the AB hydrolase superfamily. Carboxylesterase BioH family. In terms of assembly, monomer.

The protein localises to the cytoplasm. It carries out the reaction 6-carboxyhexanoyl-[ACP] methyl ester + H2O = 6-carboxyhexanoyl-[ACP] + methanol + H(+). It participates in cofactor biosynthesis; biotin biosynthesis. In terms of biological role, the physiological role of BioH is to remove the methyl group introduced by BioC when the pimeloyl moiety is complete. It allows to synthesize pimeloyl-ACP via the fatty acid synthetic pathway through the hydrolysis of the ester bonds of pimeloyl-ACP esters. This chain is Pimeloyl-[acyl-carrier protein] methyl ester esterase, found in Sodalis glossinidius (strain morsitans).